Reading from the N-terminus, the 400-residue chain is CCA-adding enzyme (400 aa).

ATP contacts are provided by Gly28 and Arg31. CTP-binding residues include Gly28 and Arg31. Asp41 and Asp43 together coordinate Mg(2+). Residues Arg112, Asp155, Arg158, Arg161, and Arg164 each contribute to the ATP site. The CTP site is built by Arg112, Asp155, Arg158, Arg161, and Arg164.

The protein belongs to the tRNA nucleotidyltransferase/poly(A) polymerase family. Bacterial CCA-adding enzyme type 3 subfamily. In terms of assembly, homodimer. Mg(2+) is required as a cofactor.

The catalysed reaction is a tRNA precursor + 2 CTP + ATP = a tRNA with a 3' CCA end + 3 diphosphate. It catalyses the reaction a tRNA with a 3' CCA end + 2 CTP + ATP = a tRNA with a 3' CCACCA end + 3 diphosphate. Catalyzes the addition and repair of the essential 3'-terminal CCA sequence in tRNAs without using a nucleic acid template. Adds these three nucleotides in the order of C, C, and A to the tRNA nucleotide-73, using CTP and ATP as substrates and producing inorganic pyrophosphate. tRNA 3'-terminal CCA addition is required both for tRNA processing and repair. Also involved in tRNA surveillance by mediating tandem CCA addition to generate a CCACCA at the 3' terminus of unstable tRNAs. While stable tRNAs receive only 3'-terminal CCA, unstable tRNAs are marked with CCACCA and rapidly degraded. The polypeptide is CCA-adding enzyme (Staphylococcus aureus (strain Mu3 / ATCC 700698)).